The primary structure comprises 101 residues: Parathymosin (101 aa).

Positions 1-101 (MSEKSVEAAA…RQKTENGASA (101 aa)) are disordered. Ser2 bears the N-acetylserine mark. A Phosphoserine modification is found at Ser2. Lys4 carries the N6-acetyllysine modification. Phosphoserine occurs at positions 5 and 13. A compositionally biased stretch (basic and acidic residues) spans 13 to 37 (SAKDLKEKKDKVEEKAGRKERKKEV). Residue Lys15 is modified to N6-acetyllysine. Residues 38-74 (VEEEENGAEEEEEETAEDGEDDDEGDEEDEEEEEEDE) show a composition bias toward acidic residues. At Thr52 the chain carries Phosphothreonine. Lys91 is modified (N6-acetyllysine).

It belongs to the pro/parathymosin family.

Its function is as follows. Parathymosin may mediate immune function by blocking the effect of prothymosin alpha which confers resistance to certain opportunistic infections. The protein is Parathymosin (Ptms) of Mus musculus (Mouse).